Here is a 229-residue protein sequence, read N- to C-terminus: Orotidine 5'-phosphate decarboxylase (229 aa).

Substrate-binding positions include D9, K31, 58 to 67 (DLKLFDIPNT), T121, R179, Q188, G208, and R209. Residue K60 is the Proton donor of the active site.

This sequence belongs to the OMP decarboxylase family. Type 1 subfamily. As to quaternary structure, homodimer.

The enzyme catalyses orotidine 5'-phosphate + H(+) = UMP + CO2. It participates in pyrimidine metabolism; UMP biosynthesis via de novo pathway; UMP from orotate: step 2/2. Catalyzes the decarboxylation of orotidine 5'-monophosphate (OMP) to uridine 5'-monophosphate (UMP). The chain is Orotidine 5'-phosphate decarboxylase from Lawsonia intracellularis (strain PHE/MN1-00).